A 369-amino-acid polypeptide reads, in one-letter code: NAD-dependent epimerase/dehydratase FUM13 (369 aa).

Tyrosine 176 provides a ligand contact to NADP(+).

The protein belongs to the NAD(P)-dependent epimerase/dehydratase family. Dihydroflavonol-4-reductase subfamily.

It functions in the pathway mycotoxin biosynthesis. Functionally, NAD-dependent epimerase/dehydratase; part of the gene cluster that mediates the biosynthesis of fumonisins B1 (FB1), B2 (FB2), B3 (FB3), and B4 (FB4), which are carcinogenic mycotoxins. Within the pathway, FUM13 stereospecifically reduces the intermediate 3-keto intermediate 2-amino-3-oxo-12,16-dimethylicosane to the 3-hydroxyl product 2-amino-3-hydroxy-12,16-dimethylicosane. The biosynthesis starts with the FUM1-catalyzed carbon chain assembly from one molecule of acetyl-CoA, eight molecules of malonyl-CoA, and two molecules of methionine (in S-adenosyl form). The C18 polyketide chain is released from the enzyme by a nucleophilic attack of a carbanion, which is derived from R-carbon of alanine by decarboxylation, on the carbonyl carbon of polyketide acyl chain. This step is catalyzed by the pyridoxal 5'-phosphate-dependent aminoacyl transferase FUM8. The resultant 3-keto intermediate is then stereospecifically reduced to a 3-hydroxyl product by reductase FUM13. Subsequent oxidations at C-10 by the cytochrome P450 monooxygenase FUM2, C-14 and C-15 by FUM6, FUM12 or FUM15, tricarballylic esterification of the hydroxyl groups on C-14 and C-15 by acyltransferase FUM14, and C-5 hydroxylation by 2-keto-glutarate-dependent dioxygenase FUM3 furnish the biosynthesis of fumonisins. The tricarballylic moieties are most likely derived from the citric acid cycle, and their addition to the carbon backbone may involve FUM7, FUM10, FUM11 and FUM14. The polypeptide is NAD-dependent epimerase/dehydratase FUM13 (Gibberella moniliformis (strain M3125 / FGSC 7600) (Maize ear and stalk rot fungus)).